The following is a 301-amino-acid chain: Small ribosomal subunit protein uS2 (301 aa).

The interval 282-301 (VRKQPVSENENVEAAAAEQK) is disordered. Residues 289–301 (ENENVEAAAAEQK) are compositionally biased toward low complexity.

Belongs to the universal ribosomal protein uS2 family.

This chain is Small ribosomal subunit protein uS2, found in Koribacter versatilis (strain Ellin345).